Reading from the N-terminus, the 117-residue chain is Small ribosomal subunit protein uS19c (117 aa).

It belongs to the universal ribosomal protein uS19 family.

It localises to the plastid. Protein S19 forms a complex with S13 that binds strongly to the 16S ribosomal RNA. In Helicosporidium sp. subsp. Simulium jonesii (Green alga), this protein is Small ribosomal subunit protein uS19c (rps19).